The chain runs to 361 residues: Phospho-N-acetylmuramoyl-pentapeptide-transferase (361 aa).

The next 10 helical transmembrane spans lie at 26–46 (AILG…VMIR), 73–93 (TMGG…WADL), 97–117 (YVWV…VDDY), 134–154 (YFWQ…TASM), 168–188 (VSLT…IVGS), 200–220 (GLAI…AYLS), 237–257 (TGEL…FLWF), 264–284 (VFMG…VAVI), 289–309 (IVLF…ILQV), and 340–360 (IVRF…SLKI).

It belongs to the glycosyltransferase 4 family. MraY subfamily. The cofactor is Mg(2+).

It localises to the cell inner membrane. It carries out the reaction UDP-N-acetyl-alpha-D-muramoyl-L-alanyl-gamma-D-glutamyl-meso-2,6-diaminopimeloyl-D-alanyl-D-alanine + di-trans,octa-cis-undecaprenyl phosphate = di-trans,octa-cis-undecaprenyl diphospho-N-acetyl-alpha-D-muramoyl-L-alanyl-D-glutamyl-meso-2,6-diaminopimeloyl-D-alanyl-D-alanine + UMP. It functions in the pathway cell wall biogenesis; peptidoglycan biosynthesis. Its function is as follows. Catalyzes the initial step of the lipid cycle reactions in the biosynthesis of the cell wall peptidoglycan: transfers peptidoglycan precursor phospho-MurNAc-pentapeptide from UDP-MurNAc-pentapeptide onto the lipid carrier undecaprenyl phosphate, yielding undecaprenyl-pyrophosphoryl-MurNAc-pentapeptide, known as lipid I. The chain is Phospho-N-acetylmuramoyl-pentapeptide-transferase from Marinobacter nauticus (strain ATCC 700491 / DSM 11845 / VT8) (Marinobacter aquaeolei).